The sequence spans 147 residues: uncharacterized protein (147 aa).

Belongs to the RTX toxin acyltransferase family.

This is an uncharacterized protein from Synechocystis sp. (strain ATCC 27184 / PCC 6803 / Kazusa).